A 345-amino-acid chain; its full sequence is MPITPQEALQRTIEHREIFHDEMVGLMRQIMRGEVSDMMVAAILTGLRVKKETIGEIAGAATVMREFSRRVDVSDHQHMVDIVGTGGDGSHTFNISTCAMFVAAAGGAKVAKHGNRSVSSKSGSADALEALGAVIELQPEQVADALAQTGIGFMYAPLHHPSMKVVAPVRREMGVRTIFNILGPLTNPAGSPNILMGVFHPDLVGIQARVLQELGAERALVVWGRDGMDELSLGAGTLVGELRDGQVREYEVHPEDFGIAMSASRNLKVADAAQSRAMLLRVLDNVPGPALDIVALNAGAALYVAGLAGSIADGVLRARAVLADGSARARLDAYVAYTHQLAGQP.

Residues glycine 84, 87–88 (GD), threonine 92, 94–97 (NIST), 112–120 (KHGNRSVSS), and serine 124 each bind 5-phospho-alpha-D-ribose 1-diphosphate. Position 84 (glycine 84) interacts with anthranilate. Position 96 (serine 96) interacts with Mg(2+). Asparagine 115 is a binding site for anthranilate. Arginine 170 contributes to the anthranilate binding site. Positions 229 and 230 each coordinate Mg(2+).

The protein belongs to the anthranilate phosphoribosyltransferase family. As to quaternary structure, homodimer. Mg(2+) is required as a cofactor.

It carries out the reaction N-(5-phospho-beta-D-ribosyl)anthranilate + diphosphate = 5-phospho-alpha-D-ribose 1-diphosphate + anthranilate. Its pathway is amino-acid biosynthesis; L-tryptophan biosynthesis; L-tryptophan from chorismate: step 2/5. In terms of biological role, catalyzes the transfer of the phosphoribosyl group of 5-phosphorylribose-1-pyrophosphate (PRPP) to anthranilate to yield N-(5'-phosphoribosyl)-anthranilate (PRA). The sequence is that of Anthranilate phosphoribosyltransferase from Xanthomonas oryzae pv. oryzae (strain MAFF 311018).